The primary structure comprises 98 residues: MSSYKYYDLIRKPIITEKTTNISEQNKYAFYVDKFAKKLTVKKAIEEIFKVKVKKVNILNVKGKKKTFKGITGTQINRKKAIVTLEKDHNIDFAGGIK.

Belongs to the universal ribosomal protein uL23 family. Part of the 50S ribosomal subunit. Contacts protein L29, and trigger factor when it is bound to the ribosome.

Functionally, one of the early assembly proteins it binds 23S rRNA. One of the proteins that surrounds the polypeptide exit tunnel on the outside of the ribosome. Forms the main docking site for trigger factor binding to the ribosome. This chain is Large ribosomal subunit protein uL23, found in Rickettsia akari (strain Hartford).